The primary structure comprises 458 residues: Light-independent protochlorophyllide reductase subunit N (458 aa).

Residues cysteine 22, cysteine 47, and cysteine 107 each contribute to the [4Fe-4S] cluster site.

This sequence belongs to the BchN/ChlN family. As to quaternary structure, protochlorophyllide reductase is composed of three subunits; ChlL, ChlN and ChlB. Forms a heterotetramer of two ChlB and two ChlN subunits. The cofactor is [4Fe-4S] cluster.

The protein localises to the plastid. The protein resides in the chloroplast. It catalyses the reaction chlorophyllide a + oxidized 2[4Fe-4S]-[ferredoxin] + 2 ADP + 2 phosphate = protochlorophyllide a + reduced 2[4Fe-4S]-[ferredoxin] + 2 ATP + 2 H2O. It participates in porphyrin-containing compound metabolism; chlorophyll biosynthesis (light-independent). Component of the dark-operative protochlorophyllide reductase (DPOR) that uses Mg-ATP and reduced ferredoxin to reduce ring D of protochlorophyllide (Pchlide) to form chlorophyllide a (Chlide). This reaction is light-independent. The NB-protein (ChlN-ChlB) is the catalytic component of the complex. This chain is Light-independent protochlorophyllide reductase subunit N, found in Chaetosphaeridium globosum (Charophycean green alga).